A 75-amino-acid polypeptide reads, in one-letter code: Small ribosomal subunit protein bS18 (75 aa).

The protein belongs to the bacterial ribosomal protein bS18 family. As to quaternary structure, part of the 30S ribosomal subunit. Forms a tight heterodimer with protein bS6.

In terms of biological role, binds as a heterodimer with protein bS6 to the central domain of the 16S rRNA, where it helps stabilize the platform of the 30S subunit. In Clostridioides difficile (strain 630) (Peptoclostridium difficile), this protein is Small ribosomal subunit protein bS18.